We begin with the raw amino-acid sequence, 377 residues long: MELRQRQTQSLYRYRRVLEGPQGAELQMDGRRILAFCSNDYLGLANHPATRAAFMQGVREYGVGSGAAHLVTGHSRAHHTLEEALAAFVGRPRVLLFSTGYSANLGVISALIGRQDAVFEDRLNHASLLDGGLLAGARFKRYRHRDYQSLEAALTATKARRRLVVTDGVFSMDGALAPLPDLAAVADRFDAWLMVDDAHGLGVLGEEGRGSVAHFGLGMAQAPILVGTLGKALGTFGAFVAGEEALIETLIQQARTYIYTTAPPSAVAVATLASLRLVETESWRRDKLTRLIAQFRQGAAQLGLQLVDSPTPIQPLLVGDAGAAVKLSERLLAQGILVTAIRPPTVPEGSARLRITLTAAHSEAQVARLLESLVQVL.

Arg-13 is a binding site for substrate. Pyridoxal 5'-phosphate is bound at residue 100–101 (GY). Position 125 (His-125) interacts with substrate. Pyridoxal 5'-phosphate contacts are provided by Ser-171, His-199, and Thr-228. Lys-231 bears the N6-(pyridoxal phosphate)lysine mark. Position 345 (Thr-345) interacts with substrate.

Belongs to the class-II pyridoxal-phosphate-dependent aminotransferase family. BioF subfamily. Homodimer. Pyridoxal 5'-phosphate is required as a cofactor.

The catalysed reaction is 6-carboxyhexanoyl-[ACP] + L-alanine + H(+) = (8S)-8-amino-7-oxononanoate + holo-[ACP] + CO2. The protein operates within cofactor biosynthesis; biotin biosynthesis. Functionally, catalyzes the decarboxylative condensation of pimeloyl-[acyl-carrier protein] and L-alanine to produce 8-amino-7-oxononanoate (AON), [acyl-carrier protein], and carbon dioxide. The protein is 8-amino-7-oxononanoate synthase of Nitrosococcus oceani (strain ATCC 19707 / BCRC 17464 / JCM 30415 / NCIMB 11848 / C-107).